A 678-amino-acid polypeptide reads, in one-letter code: MEPGGDHRSRSGGGRGGPGPAVTSARGRRLPPTAASGGTEPEEDDGGQALQLEGGALGSWGSTPLPSSRARGPASSGRKYSDHCEARASRPGKSRIPGRDHRRYYHDHWRLEYLMDFIPSRHGMVCMVCGSSLATLKLSTIKRHIRQKHPYSLHWSPREKEVISNSWDAHLGLGAGGEAESLGAQGAEEEEEEDEEEEEGANLQACPPKGSGKAPAGGGCRRQRRGVRGGSVAPRRRRLAASRRAGGSRGLGARRLERRLKESLQNWFRAECLMDYDPRGNRLVCMACGRALPSLHLDDIRAHVLEVHPSSLGLSGPQRSALLQAWGDQPEALSELTQPSPDDDLVPQDLTRKSRDSAPAAGAPSSQDLSPPDVKEEAGWVPERPGPAEEEEGEGEGEREGIPNRPRRGRDHRRHYQERWRLEYLMELDGCRRGLVCMVCGGALASLKMSTIKRHIRQRHPGSNSLSGPVKALIAQEWSEKAAHLLALGLPRPESPSVPVAPSTASASEEGGGAEEAEPEEEWWGDAPLSPGAPSERPAEEEDDEDDSQEPGGLAFPPLPLPPPPPPPPPPPRSREQRRNYQPRWRGEYLMDYDGSRRGLVCMVCGGALATLKVSTIKRHILQVHPFSMDFTPEERQTILEAYEEAALRCYGHEGFGPPAPAPRDSGADLKPGAVCRA.

Disordered stretches follow at residues 1 to 100 (MEPG…PGRD), 174 to 250 (GAGG…GSRG), 333 to 413 (LSEL…RDHR), and 493 to 583 (PESP…NYQP). Low complexity predominate over residues 66–78 (PSSRARGPASSGR). The segment covering 79 to 88 (KYSDHCEARA) has biased composition (basic and acidic residues). The span at 187 to 200 (AEEEEEEDEEEEEG) shows a compositional bias: acidic residues. Residues 205 to 214 (ACPPKGSGKA) are compositionally biased toward low complexity. Lys-375 participates in a covalent cross-link: Glycyl lysine isopeptide (Lys-Gly) (interchain with G-Cter in SUMO2). Residues 493–509 (PESPSVPVAPSTASASE) are compositionally biased toward low complexity. 2 stretches are compositionally biased toward acidic residues: residues 512-524 (GGAEEAEPEEEWW) and 539-549 (AEEEDDEDDSQ). Residues 557-572 (PPLPLPPPPPPPPPPP) are compositionally biased toward pro residues. Residues 573 to 583 (RSREQRRNYQP) are compositionally biased toward basic and acidic residues.

In Mus musculus (Mouse), this protein is Zinc finger translocation-associated protein.